A 118-amino-acid chain; its full sequence is Succinate dehydrogenase assembly factor 1, mitochondrial (118 aa).

An LYR motif 1; required for interaction with HSC20 motif is present at residues 14-16; the sequence is LYR. An LYR motif 2; not required for interaction with HSC20 motif is present at residues 53 to 55; the sequence is LYR. The tract at residues 53–65 is interaction with SDHB; the sequence is LYRRGRRQLQLLR. Residues 68–118 form a disordered region; the sequence is HATAMGTFVRPRGPAEEPGDATAPGTRLDDGGAPKNSCEDTGARETRSDGR. The span at 94–118 shows a compositional bias: basic and acidic residues; sequence RLDDGGAPKNSCEDTGARETRSDGR.

It belongs to the complex I LYR family. SDHAF1 subfamily. Interacts with SDHB within an SDHA-SDHB subcomplex. Also interacts with the iron-sulfur transfer complex formed by HSC20, HSPA9 and ISCU through direct binding to HSC20. Binding of SDHAF1 to SDHB precedes and is necessary for recruitment of the iron-sulfur transfer complex by SDHAF1.

Its subcellular location is the mitochondrion matrix. Functionally, plays an essential role in the assembly of succinate dehydrogenase (SDH), an enzyme complex (also referred to as respiratory complex II) that is a component of both the tricarboxylic acid (TCA) cycle and the mitochondrial electron transport chain, and which couples the oxidation of succinate to fumarate with the reduction of ubiquinone (coenzyme Q) to ubiquinol. Promotes maturation of the iron-sulfur protein subunit Sdhb of the SDH catalytic dimer, protecting it from the deleterious effects of oxidants. May act together with SDHAF3. Contributes to iron-sulfur cluster incorporation into SDHB by binding to SDHB and recruiting the iron-sulfur transfer complex formed by HSC20, HSPA9 and ISCU through direct binding to HSC20. This Mus musculus (Mouse) protein is Succinate dehydrogenase assembly factor 1, mitochondrial.